The sequence spans 186 residues: Protein Syd (186 aa).

It belongs to the Syd family.

Its subcellular location is the cell inner membrane. Its function is as follows. Interacts with the SecY protein in vivo. May bind preferentially to an uncomplexed state of SecY, thus functioning either as a chelating agent for excess SecY in the cell or as a regulatory factor that negatively controls the translocase function. The polypeptide is Protein Syd (Pseudoalteromonas atlantica (strain T6c / ATCC BAA-1087)).